A 218-amino-acid chain; its full sequence is Phosphoribosylformylglycinamidine synthase subunit PurQ (218 aa).

A Glutamine amidotransferase type-1 domain is found at 2–218 (TIGIVVFPGS…IKILQALLSN (217 aa)). Cysteine 86 serves as the catalytic Nucleophile. Residues histidine 194 and glutamate 196 contribute to the active site.

In terms of assembly, part of the FGAM synthase complex composed of 1 PurL, 1 PurQ and 2 PurS subunits.

Its subcellular location is the cytoplasm. It catalyses the reaction N(2)-formyl-N(1)-(5-phospho-beta-D-ribosyl)glycinamide + L-glutamine + ATP + H2O = 2-formamido-N(1)-(5-O-phospho-beta-D-ribosyl)acetamidine + L-glutamate + ADP + phosphate + H(+). The catalysed reaction is L-glutamine + H2O = L-glutamate + NH4(+). It functions in the pathway purine metabolism; IMP biosynthesis via de novo pathway; 5-amino-1-(5-phospho-D-ribosyl)imidazole from N(2)-formyl-N(1)-(5-phospho-D-ribosyl)glycinamide: step 1/2. Part of the phosphoribosylformylglycinamidine synthase complex involved in the purines biosynthetic pathway. Catalyzes the ATP-dependent conversion of formylglycinamide ribonucleotide (FGAR) and glutamine to yield formylglycinamidine ribonucleotide (FGAM) and glutamate. The FGAM synthase complex is composed of three subunits. PurQ produces an ammonia molecule by converting glutamine to glutamate. PurL transfers the ammonia molecule to FGAR to form FGAM in an ATP-dependent manner. PurS interacts with PurQ and PurL and is thought to assist in the transfer of the ammonia molecule from PurQ to PurL. In Prochlorococcus marinus (strain SARG / CCMP1375 / SS120), this protein is Phosphoribosylformylglycinamidine synthase subunit PurQ.